The chain runs to 348 residues: GDSL esterase/lipase At4g30140 (348 aa).

A signal peptide spans 1 to 28 (MVEGESKALWIILATVFAVAAVAPAVHG). Catalysis depends on Ser-40, which acts as the Nucleophile. Active-site residues include Asp-316 and His-319. Asn-342 is a glycosylation site (N-linked (GlcNAc...) asparagine).

This sequence belongs to the 'GDSL' lipolytic enzyme family.

The protein resides in the secreted. This Arabidopsis thaliana (Mouse-ear cress) protein is GDSL esterase/lipase At4g30140.